The following is a 552-amino-acid chain: MSKITLSRKHAPAFSLIALLVSSAAYAENTTEKTDVLLIGGGIMSASLGTVLQEIQPDWKQLMVEKLDGVALESSNGWNNAGTGHSANMELNYTPEREDGSIDVTKALEINEAFMISRQFWSSQVKRGVLNDPHSFINSTPHMSFVWGDKNVEYLTKRYQALQQTTLFQGMQFSTDQQQIKKWAPLIIEGRDPKQKVAATWTPVGTDVNYGEITRQLVGSLKKTSNFKLETSSEVTDFKRNADNSWHVTITDVKSGKEHAVDAKYVFIGAGGGALKLLQKTGIPEADNYAGFPVGGSFLVSENPEIARQHGEKVYGQASVGAPPMSVPHLDARFLDGKRVVLFGPFATFSTKFLKNGSFFDLLSTTTTSNFMPMTDVGLDNFDLVKYLIGQVMLSDEDRFEALKEYYPTARKEDWKLIQAGQRVQIIKKDPEKGGVLKLGTEIVTDQQKTLAALLGASPGASTAAPISINVIKQLFPEQFKSEAWQSKLREIVPSYGQKLNGNVALTQQVWDETAATLQLTKPPVIQMKDAKPATPEAKPAQASSPQHDMAL.

The tract at residues 530-552 is disordered; it reads DAKPATPEAKPAQASSPQHDMAL. Residues 542 to 552 are compositionally biased toward polar residues; it reads QASSPQHDMAL.

The protein belongs to the MQO family. FAD serves as cofactor.

The enzyme catalyses (S)-malate + a quinone = a quinol + oxaloacetate. It participates in carbohydrate metabolism; tricarboxylic acid cycle; oxaloacetate from (S)-malate (quinone route): step 1/1. This chain is Probable malate:quinone oxidoreductase, found in Cronobacter sakazakii (strain ATCC BAA-894) (Enterobacter sakazakii).